The sequence spans 171 residues: Moubatin (171 aa).

An N-terminal signal peptide occupies residues 1 to 15; it reads MMLVLTTLIFSFSAS. Disulfide bonds link C23/C144, C55/C166, and C118/C145.

It belongs to the calycin superfamily. Lipocalin family. Post-translationally, the N-terminus is blocked. As to expression, expressed in salivary glands.

It is found in the secreted. Its function is as follows. Tick salivary platelet aggregation inhibitor that plays an important part in the anti-hemostatic strategy of ticks. Acts by scavenging thromboxane A2 (TXA2), a potent inducer of platelet aggregation and blood vessel constriction. As a consequence, is a specific inhibitor of collagen-induced platelet aggregation. In addition, it also acts as a potent inhibitor of TXA2-mediated vasoconstriction. Has also been found to bind leukotriene B4 (LTB4) (which also derives from arachidonic acid, as TXA2) with affinities in the nanomolar range. It does not interact with complement protein C5. In Ornithodoros moubata (Soft tick), this protein is Moubatin.